Reading from the N-terminus, the 252-residue chain is 3-deoxy-manno-octulosonate cytidylyltransferase (252 aa).

It belongs to the KdsB family.

The protein resides in the cytoplasm. The enzyme catalyses 3-deoxy-alpha-D-manno-oct-2-ulosonate + CTP = CMP-3-deoxy-beta-D-manno-octulosonate + diphosphate. Its pathway is nucleotide-sugar biosynthesis; CMP-3-deoxy-D-manno-octulosonate biosynthesis; CMP-3-deoxy-D-manno-octulosonate from 3-deoxy-D-manno-octulosonate and CTP: step 1/1. It participates in bacterial outer membrane biogenesis; lipopolysaccharide biosynthesis. Its function is as follows. Activates KDO (a required 8-carbon sugar) for incorporation into bacterial lipopolysaccharide in Gram-negative bacteria. The chain is 3-deoxy-manno-octulosonate cytidylyltransferase from Trichlorobacter lovleyi (strain ATCC BAA-1151 / DSM 17278 / SZ) (Geobacter lovleyi).